Consider the following 378-residue polypeptide: Queuine tRNA-ribosyltransferase (378 aa).

Aspartate 91 functions as the Proton acceptor in the catalytic mechanism. Substrate-binding positions include 91–95 (DSGGF), aspartate 145, glutamine 189, and glycine 216. The interval 247–253 (GVGKPED) is RNA binding. Aspartate 266 acts as the Nucleophile in catalysis. The RNA binding; important for wobble base 34 recognition stretch occupies residues 271–275 (TRNAR). Positions 304, 306, 309, and 335 each coordinate Zn(2+).

It belongs to the queuine tRNA-ribosyltransferase family. As to quaternary structure, homodimer. Within each dimer, one monomer is responsible for RNA recognition and catalysis, while the other monomer binds to the replacement base PreQ1. It depends on Zn(2+) as a cofactor.

It carries out the reaction 7-aminomethyl-7-carbaguanine + guanosine(34) in tRNA = 7-aminomethyl-7-carbaguanosine(34) in tRNA + guanine. It functions in the pathway tRNA modification; tRNA-queuosine biosynthesis. In terms of biological role, catalyzes the base-exchange of a guanine (G) residue with the queuine precursor 7-aminomethyl-7-deazaguanine (PreQ1) at position 34 (anticodon wobble position) in tRNAs with GU(N) anticodons (tRNA-Asp, -Asn, -His and -Tyr). Catalysis occurs through a double-displacement mechanism. The nucleophile active site attacks the C1' of nucleotide 34 to detach the guanine base from the RNA, forming a covalent enzyme-RNA intermediate. The proton acceptor active site deprotonates the incoming PreQ1, allowing a nucleophilic attack on the C1' of the ribose to form the product. After dissociation, two additional enzymatic reactions on the tRNA convert PreQ1 to queuine (Q), resulting in the hypermodified nucleoside queuosine (7-(((4,5-cis-dihydroxy-2-cyclopenten-1-yl)amino)methyl)-7-deazaguanosine). This is Queuine tRNA-ribosyltransferase from Vibrio campbellii (strain ATCC BAA-1116).